We begin with the raw amino-acid sequence, 235 residues long: Ion-translocating oxidoreductase complex subunit E (235 aa).

Helical transmembrane passes span 63–83, 93–113, 117–137, 152–172, and 206–226; these read LGLG…ISLF, IPIY…LMNA, TLYQ…IIIG, IWDG…LGAL, and SFLL…LLAI.

This sequence belongs to the NqrDE/RnfAE family. As to quaternary structure, the complex is composed of six subunits: RnfA, RnfB, RnfC, RnfD, RnfE and RnfG.

Its subcellular location is the cell inner membrane. Part of a membrane-bound complex that couples electron transfer with translocation of ions across the membrane. This chain is Ion-translocating oxidoreductase complex subunit E, found in Haemophilus influenzae (strain ATCC 51907 / DSM 11121 / KW20 / Rd).